The following is a 352-amino-acid chain: S-adenosylmethionine:tRNA ribosyltransferase-isomerase (352 aa).

The protein belongs to the QueA family. As to quaternary structure, monomer.

The protein resides in the cytoplasm. It catalyses the reaction 7-aminomethyl-7-carbaguanosine(34) in tRNA + S-adenosyl-L-methionine = epoxyqueuosine(34) in tRNA + adenine + L-methionine + 2 H(+). The protein operates within tRNA modification; tRNA-queuosine biosynthesis. Transfers and isomerizes the ribose moiety from AdoMet to the 7-aminomethyl group of 7-deazaguanine (preQ1-tRNA) to give epoxyqueuosine (oQ-tRNA). The chain is S-adenosylmethionine:tRNA ribosyltransferase-isomerase from Dechloromonas aromatica (strain RCB).